Consider the following 565-residue polypeptide: Adenine deaminase (565 aa).

Belongs to the metallo-dependent hydrolases superfamily. Adenine deaminase family. Mn(2+) serves as cofactor.

It catalyses the reaction adenine + H2O + H(+) = hypoxanthine + NH4(+). This Lactobacillus delbrueckii subsp. bulgaricus (strain ATCC 11842 / DSM 20081 / BCRC 10696 / JCM 1002 / NBRC 13953 / NCIMB 11778 / NCTC 12712 / WDCM 00102 / Lb 14) protein is Adenine deaminase.